The primary structure comprises 539 residues: Polyol transporter 5 (539 aa).

Over residues 1-11 (MTGATPENRTA) the composition is skewed to polar residues. Residues 1–24 (MTGATPENRTAPSPPPVKHVPESV) form a disordered region. The next 12 membrane-spanning stretches (helical) occupy residues 37–57 (FACAILASMTSILLGYDIGVM), 73–93 (LQIGILAGSLNIYSLIGSCAA), 104–124 (YTIVLAGAIFFAGAILMGLSP), 127–147 (AFLMFGRFIAGIGVGYALMIA), 165–185 (SFPEVFINAGIMLGYVSNLAF), 196–216 (LMLGIGAVPSVILAIGVLAMP), 296–316 (IAAIGIHFFQQASGIDAVVLF), 333–353 (LLATVAVGVVKTSFILVATFL), 364–384 (LTSVGGMVLSLAALGTSLTII), 391–411 (VMWAVVVAIATVMTYVATFSI), 433–453 (GSSMGVVVNRVTSGVISISFL), and 463–483 (GAFYLFGGIATVAWVFFYTFL). Basic and acidic residues-rich tracts occupy residues 503–514 (WRDSKSKPKGNP) and 530–539 (QWKEGDTQSS). A disordered region spans residues 503 to 539 (WRDSKSKPKGNPEKTVPNPEVEIGSNKQWKEGDTQSS).

It belongs to the major facilitator superfamily. Sugar transporter (TC 2.A.1.1) family. As to expression, highly expressed in roots. Expressed in vascular tissue of leaves, sepals and siliques.

It is found in the cell membrane. Its function is as follows. Plasma membrane broad-spectrum sugar-proton symporter. Mediates the uptake of linear polyols such as sorbitol, xylitol, erythritol or glycerol. Can transport the cyclic polyol myo-inositol and different hexoses, pentoses (including ribose), tetroses and sugar alcohols. The polypeptide is Polyol transporter 5 (PLT5) (Arabidopsis thaliana (Mouse-ear cress)).